The following is a 112-amino-acid chain: Large ribosomal subunit protein uL22 (112 aa).

The protein belongs to the universal ribosomal protein uL22 family. In terms of assembly, part of the 50S ribosomal subunit.

In terms of biological role, this protein binds specifically to 23S rRNA; its binding is stimulated by other ribosomal proteins, e.g. L4, L17, and L20. It is important during the early stages of 50S assembly. It makes multiple contacts with different domains of the 23S rRNA in the assembled 50S subunit and ribosome. Functionally, the globular domain of the protein is located near the polypeptide exit tunnel on the outside of the subunit, while an extended beta-hairpin is found that lines the wall of the exit tunnel in the center of the 70S ribosome. This Sulfurovum sp. (strain NBC37-1) protein is Large ribosomal subunit protein uL22.